The chain runs to 682 residues: Histone deacetylase 18 (682 aa).

Residues 59 to 382 (KVGLVYDETM…SLACVQVLLE (324 aa)) form a histone deacetylase region. The active-site Proton donor/acceptor is His-191. Residues Asp-231, His-233, and Asp-324 each contribute to the Zn(2+) site. Positions 430-608 (SAERNSADAL…DKELQEDRSR (179 aa)) form a coiled coil.

This sequence belongs to the histone deacetylase family. HD type 2 subfamily. Zn(2+) serves as cofactor. As to expression, expressed in roots, stems, young rosette leaves, flowers and siliques.

It localises to the nucleus. It is found in the cytoplasm. The catalysed reaction is N(6)-acetyl-L-lysyl-[histone] + H2O = L-lysyl-[histone] + acetate. Functionally, responsible for the deacetylation of lysine residues on the N-terminal part of the core histones (H2A, H2B, H3 and H4). Histone deacetylation gives a tag for epigenetic repression and plays an important role in transcriptional regulation, cell cycle progression and developmental events. Histone deacetylases act via the formation of large multiprotein complexes. Required for appropriate cellular patterning in the root epidermis. Involved in the differentiation of hair and non-hair cells in the root epidermis. Is not directly involved in the regulation of the expression of pattern genes. Regulates the transcription of certain kinase genes, which are components of a positional information relay system, by changing their histone acetylation status. The chain is Histone deacetylase 18 from Arabidopsis thaliana (Mouse-ear cress).